The sequence spans 591 residues: Paxillin (591 aa).

Methionine 1 carries the post-translational modification N-acetylmethionine. The short motif at 3–15 (DLDALLADLESTT) is the LD motif 1 element. Residues 17-139 (HISKRPVFLS…SPTVMSSSLG (123 aa)) are disordered. A Phosphotyrosine; by PTK6 modification is found at tyrosine 31. The segment covering 45–54 (VPPPVPPPPS) has biased composition (pro residues). Residue serine 83 is modified to Phosphoserine. At tyrosine 88 the chain carries Phosphotyrosine. Residues 89-99 (SSSAKNSSASN) show a composition bias toward low complexity. Serine 106 is subject to Phosphoserine. Residue tyrosine 118 is modified to Phosphotyrosine; by PTK6. Serine 119, serine 126, and serine 130 each carry phosphoserine. Residues 121–137 (PNKQKSAEPSPTVMSSS) show a composition bias toward polar residues. Threonine 132 bears the Phosphothreonine mark. Phosphoserine is present on residues serine 137, serine 140, and serine 143. An LD motif 2 motif is present at residues 144–156 (ELDRLLLELNAVQ). The interval 156-261 (QHSPPGFPAD…QQQTRISASS (106 aa)) is disordered. A Phosphotyrosine modification is found at tyrosine 181. Residues 216–228 (SVESLLDELESSV) carry the LD motif 3 motif. Serine 230 carries the post-translational modification Phosphoserine. Positions 236 to 261 (TVNQGEMSSPQRVTSSQQQTRISASS) are enriched in polar residues. Position 244 is a phosphoserine; by CDK5 (serine 244). A phosphoserine mark is found at serine 250, serine 258, serine 261, serine 272, serine 303, serine 322, serine 332, and serine 340. Residues 262-315 (ATRELDELMASLSDFKMQGLEQRVDGERPWAAGWPPSSRQSSPEGQDEGGFMAQ) form a required for binding to PARVA and ILK region. The short motif at 265-276 (ELDELMASLSDF) is the LD motif 4 element. Residues 289–338 (RPWAAGWPPSSRQSSPEGQDEGGFMAQGKTGSSSPPGGLSKPGSQLDSML) form a disordered region. Low complexity predominate over residues 315-334 (QGKTGSSSPPGGLSKPGSQL). The LD motif 5 motif lies at 333 to 345 (QLDSMLGSLQSDL). 4 consecutive LIM zinc-binding domains span residues 356–415 (GVCG…LFSP), 416–473 (RCYY…DMFA), 474–533 (PKCG…RRGS), and 534–591 (LCSG…KLFC). A Phosphoserine modification is found at serine 533.

Belongs to the paxillin family. As to quaternary structure, interacts in vitro with VCL/vinculin as well as to the SH3 domain of SRC and, when tyrosine phosphorylated, to the SH2 domain of CRK. Interacts with GIT1. Interacts with NUDT16L1/SDOS. Interacts with PTK2/FAK1. Interacts with PTK2B/PYK2. Interacts with ASAP2. Interacts with unphosphorylated ITGA4. Interacts with RNF5. Interacts with PDCD10. Interacts with NEK3, the interaction is prolactin-dependent. Interacts with PTK6. Interacts with TGFB1I1. Interacts with SORBS1. Interacts with PARVB. Interacts (via LD motif 4) with PARVA/PARVIN. Interacts (via LD motif 4) with ILK. Interacts (via cytoplasmic domain) with CEACAM1; the interaction is phosphotyrosyl-dependent. Interacts with LIMA1; this complex stabilizes actin dynamics. Interacts with CD36 (via C-terminus). Interacts with TRIM15. Interacts with PAK4; PAK4 acts as a scaffold to suppport PAXI phosphorylation at Ser-272. Post-translationally, phosphorylated by MAPK1/ERK2. Phosphorylated on tyrosine residues during integrin-mediated cell adhesion, embryonic development, fibroblast transformation and following stimulation of cells by mitogens. Phosphorylation at Ser-244 by CDK5 reduces its interaction with PTK2/FAK1 in matrix-cell focal adhesions (MCFA) during oligodendrocytes (OLs) differentiation. Phosphorylation at Tyr-31 and Tyr-118 by PTK6 promote the activation of RAC1 via CRK/CrKII, thereby promoting migration and invasion. Phosphorylation at Ser-250 by SLK is required for PXN redistribution and cell motility. Phosphorylation at Ser-272 promotes focal adhesion disassembly during cell migration.

The protein localises to the cytoplasm. It localises to the cytoskeleton. The protein resides in the cell junction. Its subcellular location is the focal adhesion. It is found in the cell cortex. Cytoskeletal protein involved in actin-membrane attachment at sites of cell adhesion to the extracellular matrix (focal adhesion). Recruits other proteins such as TRIM15 to focal adhesion. In Mus musculus (Mouse), this protein is Paxillin.